A 112-amino-acid polypeptide reads, in one-letter code: Nitrogen regulatory protein P-II (112 aa).

Y51 is subject to O-UMP-tyrosine.

The protein belongs to the P(II) protein family. As to quaternary structure, homotrimer.

In terms of biological role, P-II indirectly controls the transcription of the glutamine synthetase gene (glnA). P-II prevents NR-II-catalyzed conversion of NR-I to NR-I-phosphate, the transcriptional activator of glnA. When P-II is uridylylated to P-II-UMP, these events are reversed. When the ratio of Gln to 2-ketoglutarate decreases, P-II is uridylylated to P-II-UMP, which causes the deadenylation of glutamine synthetase, so activating the enzyme. This is Nitrogen regulatory protein P-II (glnB) from Rhodobacter capsulatus (Rhodopseudomonas capsulata).